A 216-amino-acid chain; its full sequence is MNNLPNAPFAPTEHRLGLYPVVDSLAWISRLLQTGVTTIQLRIKDLPEDQVEEEIQQAIMLGRQYNARLFINDYWRLAIKHGAYGVHLGQEDLVIADLNAIQKTGLRLGISTHDEQELARAKSLRPSYIALGHIFPTTTKAMPSSPQGVEALKRQVENTPDYSTVAIGGISLERVPDVIATGVGSVALVSAITKAKDWRQATAQLLYLVEGIELKG.

Residues 40–44 (QLRIK) and asparagine 72 each bind 4-amino-2-methyl-5-(diphosphooxymethyl)pyrimidine. Residues aspartate 73 and aspartate 92 each coordinate Mg(2+). Residue serine 111 participates in 4-amino-2-methyl-5-(diphosphooxymethyl)pyrimidine binding. Residue 137-139 (TTT) coordinates 2-[(2R,5Z)-2-carboxy-4-methylthiazol-5(2H)-ylidene]ethyl phosphate. Lysine 140 serves as a coordination point for 4-amino-2-methyl-5-(diphosphooxymethyl)pyrimidine. 2-[(2R,5Z)-2-carboxy-4-methylthiazol-5(2H)-ylidene]ethyl phosphate is bound by residues glycine 169 and 189–190 (VS).

The protein belongs to the thiamine-phosphate synthase family. Mg(2+) is required as a cofactor.

The enzyme catalyses 2-[(2R,5Z)-2-carboxy-4-methylthiazol-5(2H)-ylidene]ethyl phosphate + 4-amino-2-methyl-5-(diphosphooxymethyl)pyrimidine + 2 H(+) = thiamine phosphate + CO2 + diphosphate. The catalysed reaction is 2-(2-carboxy-4-methylthiazol-5-yl)ethyl phosphate + 4-amino-2-methyl-5-(diphosphooxymethyl)pyrimidine + 2 H(+) = thiamine phosphate + CO2 + diphosphate. It carries out the reaction 4-methyl-5-(2-phosphooxyethyl)-thiazole + 4-amino-2-methyl-5-(diphosphooxymethyl)pyrimidine + H(+) = thiamine phosphate + diphosphate. Its pathway is cofactor biosynthesis; thiamine diphosphate biosynthesis; thiamine phosphate from 4-amino-2-methyl-5-diphosphomethylpyrimidine and 4-methyl-5-(2-phosphoethyl)-thiazole: step 1/1. In terms of biological role, condenses 4-methyl-5-(beta-hydroxyethyl)thiazole monophosphate (THZ-P) and 2-methyl-4-amino-5-hydroxymethyl pyrimidine pyrophosphate (HMP-PP) to form thiamine monophosphate (TMP). The sequence is that of Thiamine-phosphate synthase from Photorhabdus laumondii subsp. laumondii (strain DSM 15139 / CIP 105565 / TT01) (Photorhabdus luminescens subsp. laumondii).